Consider the following 112-residue polypeptide: Macrodomain Ori protein (112 aa).

Positions 91-112 (FHTLSGGKPQVEGAEDYTEADD) are disordered. The segment covering 103 to 112 (GAEDYTEADD) has biased composition (acidic residues).

Belongs to the MaoP family.

Its function is as follows. Involved in the organization of the Ori region of the chromosome into a macrodomain (MD). It constrains DNA mobility in the Ori macrodomain and limits long-distance DNA interactions with other chromosomal regions. The sequence is that of Macrodomain Ori protein from Salmonella choleraesuis (strain SC-B67).